We begin with the raw amino-acid sequence, 578 residues long: tRNA (guanine(26)-N(2))-dimethyltransferase (578 aa).

Residues 18 to 451 (NVIRERNAEI…APPAVLWDIL (434 aa)) enclose the Trm1 methyltransferase domain. Arg-43 provides a ligand contact to S-adenosyl-L-methionine. Positions 63 to 92 (EKALKKQRKKVKEQEDEKTTPVPEDPPVYE) are disordered. Residues Arg-113 and Asp-131 each coordinate S-adenosyl-L-methionine. Cys-295, Cys-298, Cys-335, and Cys-338 together coordinate Zn(2+). The tract at residues 491–578 (EANPKSRKSA…PKQPKLEATA (88 aa)) is disordered. Residues 564 to 578 (DVEHLPKQPKLEATA) show a composition bias toward basic and acidic residues.

This sequence belongs to the class I-like SAM-binding methyltransferase superfamily. Trm1 family.

The enzyme catalyses guanosine(26) in tRNA + 2 S-adenosyl-L-methionine = N(2)-dimethylguanosine(26) in tRNA + 2 S-adenosyl-L-homocysteine + 2 H(+). Dimethylates a single guanine residue at position 26 of most tRNAs using S-adenosyl-L-methionine as donor of the methyl groups. This Drosophila melanogaster (Fruit fly) protein is tRNA (guanine(26)-N(2))-dimethyltransferase.